The primary structure comprises 21 residues: EFPTDYDEGEDDRPKVGLGAR.

Residues 1–11 show a composition bias toward acidic residues; that stretch reads EFPTDYDEGED. Positions 1-21 are disordered; that stretch reads EFPTDYDEGEDDRPKVGLGAR. Tyrosine 6 bears the Sulfotyrosine mark.

As to quaternary structure, heterohexamer; disulfide linked. Contains 2 sets of 3 non-identical chains (alpha, beta and gamma). The 2 heterotrimers are in head to head conformation with the N-termini in a small central domain. Post-translationally, conversion of fibrinogen to fibrin is triggered by thrombin, which cleaves fibrinopeptides A and B from alpha and beta chains, and thus exposes the N-terminal polymerization sites responsible for the formation of the soft clot.

It is found in the secreted. Its function is as follows. Cleaved by the protease thrombin to yield monomers which, together with fibrinogen alpha (FGA) and fibrinogen gamma (FGG), polymerize to form an insoluble fibrin matrix. Fibrin has a major function in hemostasis as one of the primary components of blood clots. In addition, functions during the early stages of wound repair to stabilize the lesion and guide cell migration during re-epithelialization. Was originally thought to be essential for platelet aggregation, based on in vitro studies using anticoagulated blood. However subsequent studies have shown that it is not absolutely required for thrombus formation in vivo. Enhances expression of SELP in activated platelets. Maternal fibrinogen is essential for successful pregnancy. Fibrin deposition is also associated with infection, where it protects against IFNG-mediated hemorrhage. May also facilitate the antibacterial immune response via both innate and T-cell mediated pathways. In Bison bonasus (European bison), this protein is Fibrinogen beta chain (FGB).